Reading from the N-terminus, the 230-residue chain is MEKIKVREIFNNAYSVDFGDGLKRIATKSLVPGKRVYGEKLVYSDNIEYRVWNPNKSKLGAAIINGLKKMPIKKGTKVLYLGASAGTTPSHVADIAETSLVYALEFAPRIMREFIDSCNERKNLIPVLGDANRPQDYSNIVEKVDVIFEDVAQPNQAEILVKNAKWFLKENGYAMISIKARSVDVTKNPREIFAEQKKILIEGGFEIVDEVNIEPFEKDHMMMVGIWKGN.

S-adenosyl-L-methionine-binding positions include 87 to 88 (TT), 105 to 106 (EF), 130 to 131 (DA), and 150 to 153 (DVAQ).

It belongs to the methyltransferase superfamily. Fibrillarin family. Interacts with nop5. Component of box C/D small ribonucleoprotein (sRNP) particles that contain rpl7ae, FlpA and nop5, plus a guide RNA.

Functionally, involved in pre-rRNA and tRNA processing. Utilizes the methyl donor S-adenosyl-L-methionine to catalyze the site-specific 2'-hydroxyl methylation of ribose moieties in rRNA and tRNA. Site specificity is provided by a guide RNA that base pairs with the substrate. Methylation occurs at a characteristic distance from the sequence involved in base pairing with the guide RNA. In Methanococcus maripaludis (strain C6 / ATCC BAA-1332), this protein is Fibrillarin-like rRNA/tRNA 2'-O-methyltransferase.